Here is a 212-residue protein sequence, read N- to C-terminus: External core antigen (212 aa).

Positions 1–19 (MQLFHLCLIISCSCPTVQA) are cleaved as a signal peptide. The interval 25 to 27 (GWL) is HBEAG. The interval 172-212 (LPETTVVRRRGRSPRRRTPSPRRRRSKSPRRRRSQSRESQC) is disordered. Residues 178-205 (VRRRGRSPRRRTPSPRRRRSKSPRRRRS) show a composition bias toward basic residues. The 1; half-length repeat unit spans residues 184-189 (SPRRRT). The interval 184-205 (SPRRRTPSPRRRRSKSPRRRRS) is 3 X 7 AA repeats of S-P-R-R-R-R-S. A propeptide spanning residues 184 to 212 (SPRRRTPSPRRRRSKSPRRRRSQSRESQC) is cleaved from the precursor. 2 repeat units span residues 191 to 197 (SPRRRRS) and 199 to 205 (SPRRRRS).

Belongs to the orthohepadnavirus precore antigen family. Homodimerizes. Post-translationally, phosphorylated. In terms of processing, cleaved by host furin.

The protein resides in the secreted. Its subcellular location is the host nucleus. May regulate immune response to the intracellular capsid in acting as a T-cell tolerogen, by having an immunoregulatory effect which prevents destruction of infected cells by cytotoxic T-cells. This immune regulation may predispose to chronicity during perinatal infections and prevent severe liver injury during adult infections. This is External core antigen from Hepatitis B virus genotype C subtype adr (isolate Japan/Nishioka/1983) (HBV-C).